The following is a 400-amino-acid chain: CinA-like protein (400 aa).

It belongs to the CinA family.

This Escherichia coli (strain K12 / MC4100 / BW2952) protein is CinA-like protein.